The primary structure comprises 147 residues: Small ribosomal subunit protein uS12 (147 aa).

This sequence belongs to the universal ribosomal protein uS12 family. As to quaternary structure, part of the 30S ribosomal subunit.

In terms of biological role, with S4 and S5 plays an important role in translational accuracy. Located at the interface of the 30S and 50S subunits. In Thermococcus kodakarensis (strain ATCC BAA-918 / JCM 12380 / KOD1) (Pyrococcus kodakaraensis (strain KOD1)), this protein is Small ribosomal subunit protein uS12.